The chain runs to 301 residues: Homoserine O-acetyltransferase (301 aa).

Cys142 acts as the Acyl-thioester intermediate in catalysis. Residues Lys163 and Ser192 each coordinate substrate. The active-site Proton acceptor is His235. Glu237 is an active-site residue. A substrate-binding site is contributed by Arg249.

The protein belongs to the MetA family.

It localises to the cytoplasm. It carries out the reaction L-homoserine + acetyl-CoA = O-acetyl-L-homoserine + CoA. It participates in amino-acid biosynthesis; L-methionine biosynthesis via de novo pathway; O-acetyl-L-homoserine from L-homoserine: step 1/1. In terms of biological role, transfers an acetyl group from acetyl-CoA to L-homoserine, forming acetyl-L-homoserine. This chain is Homoserine O-acetyltransferase, found in Bacillus cereus (strain 03BB102).